Reading from the N-terminus, the 169-residue chain is MFSAQQPGPPPPNQPGAPAGLMSTPPGAKNPSSTLVDDLESSFEACFASLVSQDYVNGTDQEEIRTGVEQCIQKFLDVARQTECFFLQKRLQLSVQKPEQVIKEDVSELRNELQRKEALIQKHLTKLRSWQQVLEEINGQHKKTSEMPQGPLAYLEQASANIPAPMKPT.

The segment at 1–35 (MFSAQQPGPPPPNQPGAPAGLMSTPPGAKNPSSTL) is disordered. Positions 99–137 (EQVIKEDVSELRNELQRKEALIQKHLTKLRSWQQVLEEI) form a coiled coil.

It belongs to the Mediator complex subunit 28 family. As to quaternary structure, component of the Mediator complex.

The protein localises to the nucleus. In terms of biological role, component of the Mediator complex, a coactivator involved in the regulated transcription of nearly all RNA polymerase II-dependent genes. Mediator functions as a bridge to convey information from gene-specific regulatory proteins to the basal RNA polymerase II transcription machinery. Mediator is recruited to promoters by direct interactions with regulatory proteins and serves as a scaffold for the assembly of a functional preinitiation complex with RNA polymerase II and the general transcription factors. This chain is Mediator of RNA polymerase II transcription subunit 28 (med28), found in Xenopus tropicalis (Western clawed frog).